Reading from the N-terminus, the 236-residue chain is Cytochrome c biogenesis ATP-binding export protein CcmA (236 aa).

Positions 14–235 (LEATGLQVAR…SAGDRVTGTE (222 aa)) constitute an ABC transporter domain. An ATP-binding site is contributed by 46 to 53 (GANGSGKT).

It belongs to the ABC transporter superfamily. CcmA exporter (TC 3.A.1.107) family. The complex is composed of two ATP-binding proteins (CcmA) and two transmembrane proteins (CcmB).

The protein localises to the cell inner membrane. It catalyses the reaction heme b(in) + ATP + H2O = heme b(out) + ADP + phosphate + H(+). Its function is as follows. Part of the ABC transporter complex CcmAB involved in the biogenesis of c-type cytochromes; once thought to export heme, this seems not to be the case, but its exact role is uncertain. Responsible for energy coupling to the transport system. In Alkalilimnicola ehrlichii (strain ATCC BAA-1101 / DSM 17681 / MLHE-1), this protein is Cytochrome c biogenesis ATP-binding export protein CcmA.